We begin with the raw amino-acid sequence, 119 residues long: MPRIKRGVTTRQKHKRLLDQAKGYRGRRKNTIRIARQAVEKAGQYAYRDRKVKKRSFRALWIQRINAAVRAEGLTYSQFMHGVKLAGIELDRKVMADLAMNEEAAFKSVIDQAKAALPA.

The protein belongs to the bacterial ribosomal protein bL20 family.

Its function is as follows. Binds directly to 23S ribosomal RNA and is necessary for the in vitro assembly process of the 50S ribosomal subunit. It is not involved in the protein synthesizing functions of that subunit. This chain is Large ribosomal subunit protein bL20, found in Erythrobacter litoralis (strain HTCC2594).